An 85-amino-acid polypeptide reads, in one-letter code: Putative membrane protein insertion efficiency factor (85 aa).

Belongs to the UPF0161 family.

Its subcellular location is the cell inner membrane. Functionally, could be involved in insertion of integral membrane proteins into the membrane. The chain is Putative membrane protein insertion efficiency factor from Escherichia coli O157:H7.